The primary structure comprises 143 residues: Putative pre-16S rRNA nuclease (143 aa).

The protein belongs to the YqgF nuclease family.

It is found in the cytoplasm. Functionally, could be a nuclease involved in processing of the 5'-end of pre-16S rRNA. In Ralstonia pickettii (strain 12J), this protein is Putative pre-16S rRNA nuclease.